Consider the following 126-residue polypeptide: Small ribosomal subunit protein uS13 (126 aa).

The interval 92 to 126 is disordered; sequence HRMGLPVRGQRTRTNARTRRGRRQTVAGKKKAPGK. Positions 101–126 are enriched in basic residues; sequence QRTRTNARTRRGRRQTVAGKKKAPGK.

This sequence belongs to the universal ribosomal protein uS13 family. As to quaternary structure, part of the 30S ribosomal subunit. Forms a loose heterodimer with protein S19. Forms two bridges to the 50S subunit in the 70S ribosome.

In terms of biological role, located at the top of the head of the 30S subunit, it contacts several helices of the 16S rRNA. In the 70S ribosome it contacts the 23S rRNA (bridge B1a) and protein L5 of the 50S subunit (bridge B1b), connecting the 2 subunits; these bridges are implicated in subunit movement. Contacts the tRNAs in the A and P-sites. This is Small ribosomal subunit protein uS13 from Nostoc punctiforme (strain ATCC 29133 / PCC 73102).